Consider the following 284-residue polypeptide: Deoxyribonuclease-1 (284 aa).

The signal sequence occupies residues 1–22; the sequence is MRAARLMGALLALAGLLQLALS. N-linked (GlcNAc...) asparagine glycosylation occurs at Asn40. Residue Glu100 is part of the active site. A disulfide bridge links Cys123 with Cys126. N-linked (GlcNAc...) asparagine glycosylation is present at Asn128. His156 is an active-site residue. Cysteines 195 and 231 form a disulfide.

It belongs to the DNase I family. The cofactor is Ca(2+). Requires Mg(2+) as cofactor.

It is found in the secreted. Its subcellular location is the zymogen granule. The protein resides in the nucleus envelope. The enzyme catalyses Endonucleolytic cleavage to 5'-phosphodinucleotide and 5'-phosphooligonucleotide end-products.. Its function is as follows. Serum endocuclease secreted into body fluids by a wide variety of exocrine and endocrine organs. Expressed by non-hematopoietic tissues and preferentially cleaves protein-free DNA. Among other functions, seems to be involved in cell death by apoptosis. Binds specifically to G-actin and blocks actin polymerization. Together with DNASE1L3, plays a key role in degrading neutrophil extracellular traps (NETs). NETs are mainly composed of DNA fibers and are released by neutrophils to bind pathogens during inflammation. Degradation of intravascular NETs by DNASE1 and DNASE1L3 is required to prevent formation of clots that obstruct blood vessels and cause organ damage following inflammation. The polypeptide is Deoxyribonuclease-1 (DNASE1) (Sus scrofa (Pig)).